The chain runs to 599 residues: Glucose-6-phosphate 1-dehydrogenase 3, chloroplastic (599 aa).

The span at 1 to 18 (MSSLSCPTYRSRTSSSSP) shows a compositional bias: low complexity. The segment at 1–23 (MSSLSCPTYRSRTSSSSPFLSNH) is disordered. The transit peptide at 1-66 (MSSLSCPTYR…RSQRRSVQSS (66 aa)) directs the protein to the chloroplast. At valine 67 the chain carries N-acetylvaline. NADP(+)-binding positions include 119-126 (GASGDLAK) and arginine 153. Cysteines 171 and 179 form a disulfide. Lysine 256 contacts NADP(+). D-glucose 6-phosphate contacts are provided by residues lysine 256, 286–290 (HYLGK), glutamate 324, and aspartate 343. Histidine 348 acts as the Proton acceptor in catalysis. NADP(+) is bound at residue lysine 441. Residues lysine 444 and arginine 449 each coordinate D-glucose 6-phosphate. NADP(+) is bound by residues arginine 454 and arginine 483. Glutamine 485 is a binding site for D-glucose 6-phosphate. NADP(+) contacts are provided by residues 491-493 (YLK) and arginine 576.

It belongs to the glucose-6-phosphate dehydrogenase family. In terms of assembly, forms homodimer. Interacts with G6PD1. As to expression, expressed in roots, flowers and siliques.

It is found in the plastid. The protein resides in the chloroplast stroma. The catalysed reaction is D-glucose 6-phosphate + NADP(+) = 6-phospho-D-glucono-1,5-lactone + NADPH + H(+). The protein operates within carbohydrate degradation; pentose phosphate pathway; D-ribulose 5-phosphate from D-glucose 6-phosphate (oxidative stage): step 1/3. Its activity is regulated as follows. Regulated by metabolites. Post-translationally inactivated by cysteine-mediated redox modification via the ferredoxin-thioredoxin system in the light and this avoids futile cycles with photosynthetic CO2 fixation. In terms of biological role, catalyzes the rate-limiting step of the oxidative pentose-phosphate pathway, which represents a route for the dissimilation of carbohydrates besides glycolysis. The main function of this enzyme is to provide reducing power (NADPH) and pentose phosphates for fatty acid and nucleic acid synthesis which are involved in membrane synthesis and cell division. This is Glucose-6-phosphate 1-dehydrogenase 3, chloroplastic from Arabidopsis thaliana (Mouse-ear cress).